Reading from the N-terminus, the 330-residue chain is MLSLSSYVLNLVGSILCLIGCLFIIGHFFWIPLLRTSLSRIIIYPTFILLLYDMVSFPSFISKTADLYIERSTIICNFQEAIIQYLILSNFIWSVCISVNLLYLCFSPNKNLKKNELLYHLCSWGIPLIVVVITKIPNMISDNGNQCRFKSPNYIKFYLETILFIAFMLFNFIVAFITIKHIISGNLRESETTTTSVLFVNEKKITTKKIVWRLLLYPSILSICYIMTLVLSIYQFSTESYGSGGAYANSINNKRNDKNTESGNSNNNNNSYIEILLYISKAIFLLQGFFNALVYLRSSKLRDRYKKITIFRKIFWRDEADYQSINDGFN.

Over 1-10 (MLSLSSYVLN) the chain is Extracellular. Residues 11–31 (LVGSILCLIGCLFIIGHFFWI) traverse the membrane as a helical segment. Topologically, residues 32 to 40 (PLLRTSLSR) are cytoplasmic. Residues 41–61 (IIIYPTFILLLYDMVSFPSFI) form a helical membrane-spanning segment. The Extracellular portion of the chain corresponds to 62–85 (SKTADLYIERSTIICNFQEAIIQY). A helical transmembrane segment spans residues 86–106 (LILSNFIWSVCISVNLLYLCF). Topologically, residues 107-116 (SPNKNLKKNE) are cytoplasmic. Residues 117–137 (LLYHLCSWGIPLIVVVITKIP) traverse the membrane as a helical segment. At 138-156 (NMISDNGNQCRFKSPNYIK) the chain is on the extracellular side. Residues 157–177 (FYLETILFIAFMLFNFIVAFI) traverse the membrane as a helical segment. Residues 178–213 (TIKHIISGNLRESETTTTSVLFVNEKKITTKKIVWR) lie on the Cytoplasmic side of the membrane. Residues 214–234 (LLLYPSILSICYIMTLVLSIY) form a helical membrane-spanning segment. Residues 235 to 274 (QFSTESYGSGGAYANSINNKRNDKNTESGNSNNNNNSYIE) are Extracellular-facing. Asn269 is a glycosylation site (N-linked (GlcNAc...) asparagine). A helical transmembrane segment spans residues 275–295 (ILLYISKAIFLLQGFFNALVY). The Cytoplasmic segment spans residues 296 to 330 (LRSSKLRDRYKKITIFRKIFWRDEADYQSINDGFN).

This sequence belongs to the G-protein coupled receptor 5 family.

Its subcellular location is the membrane. Its function is as follows. Receptor for cAMP. The sequence is that of Cyclic AMP receptor-like protein E (crlE) from Dictyostelium discoideum (Social amoeba).